Consider the following 469-residue polypeptide: tRNA modification GTPase MnmE (469 aa).

3 residues coordinate (6S)-5-formyl-5,6,7,8-tetrahydrofolate: R26, E88, and R127. A TrmE-type G domain is found at 222–390; that stretch reads GLKVAIVGRP…LEDAILHLVQ (169 aa). Residue N232 participates in K(+) binding. GTP contacts are provided by residues 232-237, 251-257, 276-279, and 344-347; these read NVGKSS, TDLPGTT, DTAG, and NKAD. S236 contacts Mg(2+). K(+) contacts are provided by T251, L253, and T256. Position 257 (T257) interacts with Mg(2+). K469 serves as a coordination point for (6S)-5-formyl-5,6,7,8-tetrahydrofolate.

This sequence belongs to the TRAFAC class TrmE-Era-EngA-EngB-Septin-like GTPase superfamily. TrmE GTPase family. In terms of assembly, homodimer. Heterotetramer of two MnmE and two MnmG subunits. The cofactor is K(+).

The protein localises to the cytoplasm. Its function is as follows. Exhibits a very high intrinsic GTPase hydrolysis rate. Involved in the addition of a carboxymethylaminomethyl (cmnm) group at the wobble position (U34) of certain tRNAs, forming tRNA-cmnm(5)s(2)U34. The chain is tRNA modification GTPase MnmE from Synechococcus elongatus.